The sequence spans 397 residues: Zinc finger CCCH domain-containing protein 33 (397 aa).

5 consecutive C3H1-type zinc fingers follow at residues 40–68 (RPGE…HPRD), 85–113 (RIGQ…HPRN), 131–159 (RSNE…HPQP), 274–302 (RPGQ…HPRD), and 320–348 (RPGE…HPMR). The disordered stretch occupies residues 361-397 (EVVETSTGKSRRLSVSETRQAATTSSGKDTTIDNTQQ). Residues 364–397 (ETSTGKSRRLSVSETRQAATTSSGKDTTIDNTQQ) show a composition bias toward polar residues.

The protein resides in the nucleus. In Arabidopsis thaliana (Mouse-ear cress), this protein is Zinc finger CCCH domain-containing protein 33 (ZFN1).